Consider the following 473-residue polypeptide: Cannabinoid receptor 1 (473 aa).

At 1 to 117 (MKSILDGLAD…CFMILNPSQQ (117 aa)) the chain is on the extracellular side. Positions 2–23 (KSILDGLADTTFRTITTDLLYV) are required for mitochondrial localization. N-linked (GlcNAc...) asparagine glycosylation is found at asparagine 78 and asparagine 84. The helical transmembrane segment at 118–143 (LAIAVLSLTLGTFTVLENLLVLCVIL) threads the bilayer. Residues 144-155 (HSRSLRCRPSYH) lie on the Cytoplasmic side of the membrane. The helical transmembrane segment at 156-176 (FIGSLAVADLLGSVIFVYSFV) threads the bilayer. Residues 177–188 (DFHVFHRKDSPN) are Extracellular-facing. The helical transmembrane segment at 189–213 (VFLFKLGGVTASFTASVGSLFLTAI) threads the bilayer. At 214–233 (DRYISIHRPLAYKRIVTRPK) the chain is on the cytoplasmic side. Residues 234–256 (AVVAFCLMWTIAIVIAVLPLLGW) traverse the membrane as a helical segment. Topologically, residues 257–274 (NCKKLQSVCSDIFPLIDE) are extracellular. The chain crosses the membrane as a helical span at residues 275–300 (TYLMFWIGVTSVLLLFIVYAYMYILW). The Cytoplasmic portion of the chain corresponds to 301 to 345 (KAHSHAVRMIQRGTQKSIIIHTSEDGKVQVTRPDQARMDIRLAKT). A helical transmembrane segment spans residues 346 to 366 (LVLILVVLIICWGPLLAIMVY). The Extracellular segment spans residues 367–378 (DVFGKMNKLIKT). Residues 379–400 (VFAFCSMLCLLNSTVNPIIYAL) form a helical membrane-spanning segment. Residues 401–473 (RSKDLRHAFR…VSTDTSAEAL (73 aa)) are Cytoplasmic-facing. Cysteine 416 carries S-palmitoyl cysteine lipidation. A phosphoserine mark is found at serine 426 and serine 430.

The protein belongs to the G-protein coupled receptor 1 family. In terms of assembly, interacts (via C-terminus) with CNRIP1. Associates with G protein alpha subunits, including G(i) alpha-1/GNAI1, G(i) alpha-3/GNAI3 and G(o)-alpha/GNAO1; palmitoylation is important for interaction with GNAI3 and GNAO1. Post-translationally, palmitoylation at Cys-416 is important for recruitment at both plasma membrane and lipid rafts and association with G protein alpha subunits. Expressed in the brain, in the striatum, medial septum, descending arm of the band of Broca, the amygdaloid nucleus, the hippocampus and cortex (at protein level). High levels in the lateral striatum. In rostral brain regions, high expression levels in the dorsal lateral striatum, while in the caudal brain regions, high levels are observed in the ventral lateral striatum. Expressed in monocytes/macrophages (at protein level). Expressed in striated muscles and in vascular smooth muscles cells (at protein level).

It localises to the cell membrane. The protein localises to the mitochondrion outer membrane. It is found in the cell projection. Its subcellular location is the axon. The protein resides in the presynapse. With respect to regulation, hemopressin, a peptide derived from hemoglobin subunit alpha (HBA1 and/or HBA2), acts as an antagonist peptide: hemopressin-binding efficiently blocks cannabinoid receptor CNR1 and subsequent signaling. Its function is as follows. G-protein coupled receptor for cannabinoids, including endocannabinoids (eCBs), such as N-arachidonoylethanolamide (also called anandamide or AEA) and 2-arachidonoylglycerol (2-AG). Mediates many cannabinoid-induced effects, acting, among others, on food intake, memory loss, gastrointestinal motility, catalepsy, ambulatory activity, anxiety, chronic pain. Signaling typically involves reduction in cyclic AMP. In the hypothalamus, may have a dual effect on mitochondrial respiration depending upon the agonist dose and possibly upon the cell type. Increases respiration at low doses, while decreases respiration at high doses. At high doses, CNR1 signal transduction involves G-protein alpha-i protein activation and subsequent inhibition of mitochondrial soluble adenylate cyclase, decrease in cyclic AMP concentration, inhibition of protein kinase A (PKA)-dependent phosphorylation of specific subunits of the mitochondrial electron transport system, including NDUFS2. In the hypothalamus, inhibits leptin-induced reactive oxygen species (ROS) formation and mediates cannabinoid-induced increase in SREBF1 and FASN gene expression. In response to cannabinoids, drives the release of orexigenic beta-endorphin, but not that of melanocyte-stimulating hormone alpha/alpha-MSH, from hypothalamic POMC neurons, hence promoting food intake. In the hippocampus, regulates cellular respiration and energy production in response to cannabinoids. Involved in cannabinoid-dependent depolarization-induced suppression of inhibition (DSI), a process in which depolarization of CA1 postsynaptic pyramidal neurons mobilizes eCBs, which retrogradely activate presynaptic CB1 receptors, transiently decreasing GABAergic inhibitory neurotransmission. Also reduces excitatory synaptic transmission. In superior cervical ganglions and cerebral vascular smooth muscle cells, inhibits voltage-gated Ca(2+) channels in a constitutive, as well as agonist-dependent manner. Induces leptin production in adipocytes and reduces LRP2-mediated leptin clearance in the kidney, hence participating in hyperleptinemia. In adipose tissue, CNR1 signaling leads to increased expression of SREBF1, ACACA and FASN genes. In the liver, activation by endocannabinoids leads to increased de novo lipogenesis and reduced fatty acid catabolism, associated with increased expression of SREBF1/SREBP-1, GCK, ACACA, ACACB and FASN genes. May also affect de novo cholesterol synthesis and HDL-cholesteryl ether uptake. Peripherally modulates energy metabolism. In high carbohydrate diet-induced obesity, may decrease the expression of mitochondrial dihydrolipoyl dehydrogenase/DLD in striated muscles, as well as that of selected glucose/ pyruvate metabolic enzymes, hence affecting energy expenditure through mitochondrial metabolism. In response to cannabinoid anandamide, elicits a pro-inflammatory response in macrophages, which involves NLRP3 inflammasome activation and IL1B and IL18 secretion. In macrophages infiltrating pancreatic islets, this process may participate in the progression of type-2 diabetes and associated loss of pancreatic beta-cells. In Rattus norvegicus (Rat), this protein is Cannabinoid receptor 1 (Cnr1).